The following is a 78-amino-acid chain: Calcium/calmodulin-dependent protein kinase II inhibitor 1 (78 aa).

A CAMK2 inhibitory domain region spans residues 41–68 (NKRPPKLGQIGRSKRVVIEDDRIDDVLK).

This sequence belongs to the CAMK2N family. As to quaternary structure, interacts with CAMK2B; the presence of Ca(2+)/calmodulin increases the interaction but is not essential. Interacts with CAMK2A; this interaction requires CAMK2A activation by Ca(2+).

The protein localises to the synapse. It localises to the cell projection. Its subcellular location is the dendrite. The protein resides in the postsynaptic density. Functionally, potent and specific inhibitor of CaM-kinase II (CAMK2). Plays a role in the maintenance of long-term retrieval-induced memory in response to contextual fear. Modulates blood pressure and vascular reactivity via regulation of CAMK2 activity in addition to regulation of left ventricular mass. Mediates the NLRP3 inflammasome in cardiomyocytes via acting as an inhibitor of the MAPK14/p38 and MAPK8/JNK pathways, thereby regulating ventricular remodeling and cardiac rhythm post-myocardial infarction. Negatively effects insulin sensitivity and promotes lipid formation in adipose tissues independent of CAMK2 signaling. The polypeptide is Calcium/calmodulin-dependent protein kinase II inhibitor 1 (CAMK2N1) (Homo sapiens (Human)).